Here is a 447-residue protein sequence, read N- to C-terminus: N-succinylarginine dihydrolase (447 aa).

Substrate contacts are provided by residues 19 to 28, Asn110, and 137 to 138; these read GGLAVGNIAS and HR. Glu174 is an active-site residue. Position 213 (Arg213) interacts with substrate. Residue His249 is part of the active site. Substrate-binding residues include Asp251 and Asn362. The Nucleophile role is filled by Cys368.

It belongs to the succinylarginine dihydrolase family. Homodimer.

The enzyme catalyses N(2)-succinyl-L-arginine + 2 H2O + 2 H(+) = N(2)-succinyl-L-ornithine + 2 NH4(+) + CO2. It participates in amino-acid degradation; L-arginine degradation via AST pathway; L-glutamate and succinate from L-arginine: step 2/5. In terms of biological role, catalyzes the hydrolysis of N(2)-succinylarginine into N(2)-succinylornithine, ammonia and CO(2). The protein is N-succinylarginine dihydrolase of Nitrosospira multiformis (strain ATCC 25196 / NCIMB 11849 / C 71).